The chain runs to 461 residues: Juvenile hormone epoxide hydrolase (461 aa).

The chain crosses the membrane as a helical span at residues 4–24 (LLFIALPLLVLASIPLYLLVL). Aspartate 227 acts as the Nucleophile in catalysis. Residue tyrosine 373 is the Proton donor of the active site. The active-site Proton acceptor is the histidine 430.

Belongs to the peptidase S33 family. In terms of assembly, homodimer. As to expression, expressed in fat body, foregut and midgut but not in brain, subesophageal ganglia or silk gland of larvae on day 1 of fifth instar.

Its subcellular location is the microsome membrane. It is found in the endoplasmic reticulum membrane. It carries out the reaction cis-stilbene oxide + H2O = (1R,2R)-hydrobenzoin. It catalyses the reaction 1-(4-methoxyphenyl)-N-methyl-N-[(3-methyloxetan-3-yl)methyl]methanamine + H2O = 2-{[(4-methoxybenzyl)(methyl)amino]methyl}-2-methylpropane-1,3-diol. Its function is as follows. Catalyzes juvenile hormone hydrolysis. Degrades juvenile hormone III (JH III) about 3 times and 5 times slower than juvenile hormone I (JH I) and II (JH II), respectively. Degrades cis-stilbene oxide and trans-stilbene oxide about 18 and 43 times slower than JH III, respectively. This chain is Juvenile hormone epoxide hydrolase, found in Bombyx mori (Silk moth).